A 218-amino-acid polypeptide reads, in one-letter code: MRLILLGAPGAGKGTQAGFIKDKYNIPQISTGDMLRAAVKAGTPLGIAAKKIMDEGGLVSDDIIIGLVKDRLKDGDCANGYLFDGFPRTIPQADAMKDAGVAIDYVLEIDVPDEAIVERMSGRRVHPASGRTYHVKFNPPKVAGRDDVTGEELIQRDDDKEETVKKRLSVYHDQTEVLVGYYNKWAESGQPGAPKYRKIAGVGPVDQIRDNAFKALEG.

10–15 (GAGKGT) contacts ATP. The tract at residues 30 to 59 (STGDMLRAAVKAGTPLGIAAKKIMDEGGLV) is NMP. AMP contacts are provided by residues threonine 31, arginine 36, 57–59 (GLV), 85–88 (GFPR), and glutamine 92. The LID stretch occupies residues 122–159 (GRRVHPASGRTYHVKFNPPKVAGRDDVTGEELIQRDDD). Residues arginine 123 and 132-133 (TY) contribute to the ATP site. AMP contacts are provided by arginine 156 and arginine 167. Position 203 (glycine 203) interacts with ATP.

Belongs to the adenylate kinase family. Monomer.

The protein localises to the cytoplasm. It catalyses the reaction AMP + ATP = 2 ADP. It participates in purine metabolism; AMP biosynthesis via salvage pathway; AMP from ADP: step 1/1. In terms of biological role, catalyzes the reversible transfer of the terminal phosphate group between ATP and AMP. Plays an important role in cellular energy homeostasis and in adenine nucleotide metabolism. This Herminiimonas arsenicoxydans protein is Adenylate kinase.